The sequence spans 780 residues: Pendrin (780 aa).

Over 1 to 87 the chain is Cytoplasmic; that stretch reads MAARGGRSEP…YRVKEWLLSD (87 aa). Residues 88-108 form a helical membrane-spanning segment; it reads IISGVSTGLVGTLQGMAYALL. Position 109 (alanine 109) is a topological domain, extracellular. Residues 110-130 traverse the membrane as a helical segment; it reads AVPVQFGLYSAFFPILTYFVF. The Cytoplasmic segment spans residues 131 to 135; the sequence is GTSRH. A helical membrane pass occupies residues 136-156; sequence ISVGPFPVVSLMVGSVVLSMA. Residues 157–191 are Extracellular-facing; that stretch reads PDDHFLVPSGNGSALNSTTLDTGTRDAARVLLAST. Residues 192 to 212 traverse the membrane as a helical segment; the sequence is LTLLVGIIQLVFGGLQIGFIV. Over 213 to 218 the chain is Cytoplasmic; the sequence is RYLADP. A helical membrane pass occupies residues 219–239; the sequence is LVGGFTTAAAFQVLVSQLKIV. Residues 240–263 lie on the Extracellular side of the membrane; it reads LNVSTKNYNGILSIIYTLIEIFQN. Residues 264–284 traverse the membrane as a helical segment; it reads IGDTNIADFIAGLLTIIVCMA. Over 285-295 the chain is Cytoplasmic; that stretch reads VKELNDRFKHR. The chain crosses the membrane as a helical span at residues 296–316; the sequence is IPVPIPIEVIVTIIATAISYG. The Extracellular portion of the chain corresponds to 317–344; sequence ANLEKNYNAGIVKSIPSGFLPPVLPSVG. Residues 345 to 365 traverse the membrane as a helical segment; it reads LFSDMLAASFSIAVVAYAIAV. The Cytoplasmic segment spans residues 366–384; that stretch reads SVGKVYATKHDYVIDGNQE. Residues 385-405 traverse the membrane as a helical segment; that stretch reads FIAFGISNVFSGFFSCFVATT. At 406 to 421 the chain is on the extracellular side; that stretch reads ALSRTAVQESTGGKTQ. The chain crosses the membrane as a helical span at residues 422 to 442; that stretch reads VAGLISAVIVMVAIVALGRLL. Residues 443 to 448 lie on the Cytoplasmic side of the membrane; sequence EPLQKS. Residues 449–469 traverse the membrane as a helical segment; the sequence is VLAAVVIANLKGMFMQVCDVP. The Extracellular portion of the chain corresponds to 470–486; it reads RLWKQNKTDAVIWVFTC. Residues 487–507 form a helical membrane-spanning segment; sequence IMSIILGLDLGLLAGLLFALL. Over 508-780 the chain is Cytoplasmic; that stretch reads TVVLRVQFPS…QDEAMRRLAS (273 aa). The 195-residue stretch at 535 to 729 folds into the STAS domain; it reads HYKNLEEPEG…LTVHDAILHL (195 aa).

The protein belongs to the SLC26A/SulP transporter (TC 2.A.53) family. As to quaternary structure, interacts with IQGAP1. This interaction enhances the chloride-bicarbonate exchange activity of SLC26A4. In terms of tissue distribution, highly expressed in the kidney (at protein level). Throughout the endolymphatic duct and sac, in distinct areas of the utricle and saccule, and in the external sulcus region within the cochlea. Expressed in the parotid gland.

It localises to the apical cell membrane. The protein localises to the cell membrane. It catalyses the reaction chloride(in) = chloride(out). It carries out the reaction iodide(out) = iodide(in). The catalysed reaction is hydrogencarbonate(in) + chloride(out) = hydrogencarbonate(out) + chloride(in). The enzyme catalyses iodide(in) + hydrogencarbonate(out) = iodide(out) + hydrogencarbonate(in). It catalyses the reaction iodide(in) + chloride(out) = iodide(out) + chloride(in). It carries out the reaction formate(in) + chloride(out) = formate(out) + chloride(in). In terms of biological role, sodium-independent transporter of chloride and iodide. Mediates electroneutral iodide-chloride, iodide-bicarbonate and chloride-bicarbonate exchange with 1:1 stoichiometry. Mediates elctroneutral chloride-formate exchange. The chain is Pendrin (Slc26a4) from Mus musculus (Mouse).